A 74-amino-acid polypeptide reads, in one-letter code: Brevinin-2Ta (74 aa).

The N-terminal stretch at 1–22 (MFTMKKSLLLFFFLGTISLSLC) is a signal peptide. A propeptide spanning residues 23-41 (QEERNADEDDGEMTEEEKR) is cleaved from the precursor. Cysteine 68 and cysteine 74 form a disulfide bridge.

The protein belongs to the frog skin active peptide (FSAP) family. Brevinin subfamily. Expressed by the skin glands.

The protein localises to the secreted. Functionally, antimicrobial peptide. The protein is Brevinin-2Ta of Rana temporaria (European common frog).